The sequence spans 104 residues: Glutaredoxin (104 aa).

A Glutaredoxin domain is found at 3–103; the sequence is MIKAQELVSS…PLLTEAGAVK (101 aa). Cysteine 23 and cysteine 26 form a disulfide bridge.

The protein belongs to the glutaredoxin family. CPYC subfamily.

It is found in the cytoplasm. Has a glutathione-disulfide oxidoreductase activity in the presence of NADPH and glutathione reductase. Reduces low molecular weight disulfides and proteins. In Vernicia fordii (Tung), this protein is Glutaredoxin.